Consider the following 115-residue polypeptide: NADH-ubiquinone oxidoreductase chain 3 (115 aa).

The next 3 membrane-spanning stretches (helical) occupy residues 3-23, 55-75, and 84-104; these read FVLI…ITFW, FFLV…LLPL, and LPLM…SLAY.

It belongs to the complex I subunit 3 family. In terms of assembly, core subunit of respiratory chain NADH dehydrogenase (Complex I) which is composed of 45 different subunits. Interacts with TMEM186. Interacts with TMEM242.

The protein resides in the mitochondrion inner membrane. The enzyme catalyses a ubiquinone + NADH + 5 H(+)(in) = a ubiquinol + NAD(+) + 4 H(+)(out). Functionally, core subunit of the mitochondrial membrane respiratory chain NADH dehydrogenase (Complex I) which catalyzes electron transfer from NADH through the respiratory chain, using ubiquinone as an electron acceptor. Essential for the catalytic activity of complex I. This Pan paniscus (Pygmy chimpanzee) protein is NADH-ubiquinone oxidoreductase chain 3.